Consider the following 166-residue polypeptide: Large ribosomal subunit protein uL10 (166 aa).

It belongs to the universal ribosomal protein uL10 family. Part of the ribosomal stalk of the 50S ribosomal subunit. The N-terminus interacts with L11 and the large rRNA to form the base of the stalk. The C-terminus forms an elongated spine to which L12 dimers bind in a sequential fashion forming a multimeric L10(L12)X complex.

Forms part of the ribosomal stalk, playing a central role in the interaction of the ribosome with GTP-bound translation factors. The sequence is that of Large ribosomal subunit protein uL10 from Lactobacillus johnsonii (strain CNCM I-12250 / La1 / NCC 533).